The following is a 111-amino-acid chain: Large ribosomal subunit protein uL22 (111 aa).

The protein belongs to the universal ribosomal protein uL22 family. As to quaternary structure, part of the 50S ribosomal subunit.

Functionally, this protein binds specifically to 23S rRNA; its binding is stimulated by other ribosomal proteins, e.g. L4, L17, and L20. It is important during the early stages of 50S assembly. It makes multiple contacts with different domains of the 23S rRNA in the assembled 50S subunit and ribosome. The globular domain of the protein is located near the polypeptide exit tunnel on the outside of the subunit, while an extended beta-hairpin is found that lines the wall of the exit tunnel in the center of the 70S ribosome. The chain is Large ribosomal subunit protein uL22 from Geobacter sulfurreducens (strain ATCC 51573 / DSM 12127 / PCA).